The primary structure comprises 328 residues: Hairy/enhancer-of-split related with YRPW motif-like protein (328 aa).

The tract at residues 1 to 54 (MKRPREPSGSDSESDGPIDVGREGELSQMARPLSTPSPSQMQARKKRRGIIEKR) is disordered. The interval 42–111 (QARKKRRGII…GGTGFFDARA (70 aa)) is transcriptional repression and interaction with NCOR1 and SIN3A. In terms of domain architecture, bHLH spans 43-98 (ARKKRRGIIEKRRRDRINSSLSELRRLVPTAFEKQGSSKLEKAEVLQMTVDHLKML). The Orange domain maps to 116 to 153 (FRSIGFRECLTEVIRYLGVLEGPSSRADPVRIRLLSHL). The tract at residues 236–272 (LLPSRGASSTRRARPLERPAAPLPAAPSGRATRGSHM) is disordered.

The protein belongs to the HEY family. Self-associates. Interacts with GATA4, GATA6, HES1, HEY1 and HEY2. Interacts with HDAC1, NCOR1 and SIN3A.

The protein resides in the nucleus. Downstream effector of Notch signaling which may be required for cardiovascular development. Transcriptional repressor which binds preferentially to the canonical E box sequence 5'-CACGTG-3'. Represses transcription by the cardiac transcriptional activators GATA4 and GATA6. The protein is Hairy/enhancer-of-split related with YRPW motif-like protein (HEYL) of Bos taurus (Bovine).